Consider the following 173-residue polypeptide: Photosystem I assembly protein Ycf3 (173 aa).

TPR repeat units lie at residues 35–68, 72–105, and 120–153; these read AFVY…EEDP, SYIL…NPRM, and GEKA…APNN.

It belongs to the Ycf3 family.

Its subcellular location is the cellular thylakoid membrane. Its function is as follows. Essential for the assembly of the photosystem I (PSI) complex. May act as a chaperone-like factor to guide the assembly of the PSI subunits. This Microcystis aeruginosa (strain NIES-843 / IAM M-2473) protein is Photosystem I assembly protein Ycf3.